Consider the following 110-residue polypeptide: MEAKAIVRYVRIAPRKAQQVVDLVRGKKVDEALAILKYTPKAAAPIVEKLVKSAVANAENNNGMDIDRLYISEIYANQGPTMKRFRPRAMGRATTIRKRTSHIEVVLKEK.

Belongs to the universal ribosomal protein uL22 family. As to quaternary structure, part of the 50S ribosomal subunit.

In terms of biological role, this protein binds specifically to 23S rRNA; its binding is stimulated by other ribosomal proteins, e.g. L4, L17, and L20. It is important during the early stages of 50S assembly. It makes multiple contacts with different domains of the 23S rRNA in the assembled 50S subunit and ribosome. Its function is as follows. The globular domain of the protein is located near the polypeptide exit tunnel on the outside of the subunit, while an extended beta-hairpin is found that lines the wall of the exit tunnel in the center of the 70S ribosome. This Alkaliphilus oremlandii (strain OhILAs) (Clostridium oremlandii (strain OhILAs)) protein is Large ribosomal subunit protein uL22.